A 247-amino-acid chain; its full sequence is Bax inhibitor 1 (247 aa).

M1 is modified (N-acetylmethionine). 6 consecutive transmembrane segments (helical) span residues V58 to L78, L92 to I112, I118 to M138, Y145 to A165, A173 to V193, and H212 to L232.

This sequence belongs to the BI1 family. As to quaternary structure, interacts (via C-terminus) with calmodulin, CYTB5-B and CYTB5-D. Interacts indirectly with FAH1 via CYTB5-D. As to expression, expressed in root tips, root vasculature, flower tissues, including stamens and sepals, and in the base of siliques. Not detected in mature leaves.

It localises to the endoplasmic reticulum membrane. Its function is as follows. Suppressor of apoptosis. Modulator of endoplasmic reticulum stress-mediated programmed cell death. Involved in methyl jasmonate-induced leaf senescence through regulating cytoplasmic calcium level. The protein is Bax inhibitor 1 (BI-1) of Arabidopsis thaliana (Mouse-ear cress).